The primary structure comprises 900 residues: Aldos-2-ulose dehydratase (900 aa).

The tract at residues 1-433 (MYSKVFLKPH…NPSINVFLST (433 aa)) is dehydratase domain. Position 35 (tyrosine 35) interacts with ascopyrone M. Positions 101, 103, 105, 107, and 109 each coordinate Mg(2+). Ascopyrone M contacts are provided by tyrosine 116, methionine 120, histidine 155, histidine 215, histidine 295, and histidine 337. Histidine 155 (proton acceptor) is an active-site residue. Zn(2+) contacts are provided by histidine 215, histidine 295, histidine 337, aspartate 343, aspartate 345, aspartate 347, glutamate 349, and glutamate 351. Residues tyrosine 414, tyrosine 419, and alanine 627 each contribute to the ascopyrone M site. The isomerase domain stretch occupies residues 434 to 739 (GILAERLDEE…EFPGFETFST (306 aa)). Residues alanine 627 and histidine 630 each coordinate 1,5-anhydro-D-fructose. Positions 630, 632, and 639 each coordinate Zn(2+). Residues glutamate 639 and histidine 641 each coordinate ascopyrone M. Histidine 641 contributes to the 1,5-anhydro-D-fructose binding site. Histidine 709 provides a ligand contact to Zn(2+). Residue tryptophan 726 coordinates ascopyrone M. 1,5-anhydro-D-fructose is bound at residue tryptophan 726.

In terms of assembly, homodimer. Zn(2+) is required as a cofactor.

The enzyme catalyses 1,5-anhydro-D-fructose = microthecin + H2O. It catalyses the reaction 1,5-anhydro-D-fructose = ascopyrone M + H2O. It carries out the reaction ascopyrone M = microthecin. The catalysed reaction is 2-dehydro-D-glucose = cortalcerone + H2O. Its pathway is carbohydrate metabolism; 1,5-anhydro-D-fructose degradation. A bifunctional enzyme which catalyzes the dehydration of anhydrofructose into ascopyrone M, and the isomerization of ascopyrone M into microthecin. To a lesser extent, can also act on 2-dehydro-D-glucopyranose (D-glucosone), leading to the antibiotic cortalcerone. The polypeptide is Aldos-2-ulose dehydratase (Phanerodontia chrysosporium (White-rot fungus)).